We begin with the raw amino-acid sequence, 373 residues long: Glutamine synthetase (373 aa).

At alanine 2 the chain carries N-acetylalanine. Positions 2-25 (ATSASSHLNKGIKQMYMSLPQGEK) are required for glutamine-induced ubiquitination by CRL4(CRBN) and proteasomal degradation. Lysine 11 and lysine 14 each carry N6-acetyllysine. The 83-residue stretch at 24 to 106 (EKVQAMYIWV…VFCEVFKYNQ (83 aa)) folds into the GS beta-grasp domain. A Phosphotyrosine modification is found at tyrosine 104. One can recognise a GS catalytic domain in the interval 113 to 373 (LRHTCKRIMD…TGDQPFQYKN (261 aa)). Position 134 (glutamate 134) interacts with ATP. The Mn(2+) site is built by glutamate 134, glutamate 136, glutamate 196, and glutamate 203. An ATP-binding site is contributed by 203–208 (EFQIGP). 246–247 (NW) contributes to the L-glutamate binding site. Histidine 253 is a Mn(2+) binding site. ATP contacts are provided by residues 255–257 (NFS), arginine 319, and arginine 324. Residue arginine 319 coordinates L-glutamate. 336–338 (YFE) provides a ligand contact to ADP. Glutamate 338 is a Mn(2+) binding site. Residue arginine 340 coordinates L-glutamate. Serine 343 bears the Phosphoserine mark.

The protein belongs to the glutamine synthetase family. As to quaternary structure, decamer; composed of two pentamers. Interacts with PALMD. Interacts with RHOJ. Interacts with BEST2; this interaction tethers a fraction of GLUL to the membrane, causing a decrease of cytosolic glutamine synthase (GS) activity and inhibits the chloride channel activity of BEST2 by affecting the gating at the aperture in the absence of intracellular glutamate. Mg(2+) serves as cofactor. It depends on Mn(2+) as a cofactor. Palmitoylated; undergoes autopalmitoylation. In terms of processing, acetylated by EP300/p300; acetylation is stimulated by increased glutamine levels and promotes ubiquitin-mediated proteasomal degradation. Post-translationally, ubiquitinated by ZNRF1. Ubiquitinated by the DCX (DDB1-CUL4-X-box) E3 ubiquitin-protein ligase complex called CRL4(CRBN), leading to proteasomal degradation.

The protein resides in the cytoplasm. It is found in the cytosol. The protein localises to the microsome. Its subcellular location is the mitochondrion. It localises to the cell membrane. It catalyses the reaction L-glutamate + NH4(+) + ATP = L-glutamine + ADP + phosphate + H(+). The enzyme catalyses L-cysteinyl-[protein] + hexadecanoyl-CoA = S-hexadecanoyl-L-cysteinyl-[protein] + CoA. Glutamine synthetase activity is inhibited by methionine sulfoximine (MSO). Its function is as follows. Glutamine synthetase that catalyzes the ATP-dependent conversion of glutamate and ammonia to glutamine. Its role depends on tissue localization: in the brain, it regulates the levels of toxic ammonia and converts neurotoxic glutamate to harmless glutamine, whereas in the liver, it is one of the enzymes responsible for the removal of ammonia. Plays a key role in ammonium detoxification during erythropoiesis: the glutamine synthetase activity is required to remove ammonium generated by porphobilinogen deaminase (HMBS) during heme biosynthesis to prevent ammonium accumulation and oxidative stress. Essential for proliferation of fetal skin fibroblasts. Independently of its glutamine synthetase activity, required for endothelial cell migration during vascular development. Involved in angiogenesis by regulating membrane localization and activation of the GTPase RHOJ, possibly by promoting RHOJ palmitoylation. May act as a palmitoyltransferase for RHOJ: able to autopalmitoylate and then transfer the palmitoyl group to RHOJ. Plays a role in ribosomal 40S subunit biogenesis. Through the interaction with BEST2, inhibits BEST2 channel activity by affecting the gating at the aperture in the absence of intracellular L-glutamate, but sensitizes BEST2 to intracellular L-glutamate, which promotes the opening of BEST2 and thus relieves its inhibitory effect on BEST2. This Cricetulus griseus (Chinese hamster) protein is Glutamine synthetase.